A 244-amino-acid polypeptide reads, in one-letter code: Protein crossbronx (244 aa).

The UBC core domain maps to 20–176; it reads QQEYKILAEY…VQENIKESKE (157 aa). The disordered stretch occupies residues 209 to 244; that stretch reads AGRSKQTEPSAQQGNGGHATGLSWVKEGEFKPLSIE.

Belongs to the ubiquitin-conjugating enzyme family. FTS subfamily.

The sequence is that of Protein crossbronx (cbx) from Drosophila sechellia (Fruit fly).